A 138-amino-acid chain; its full sequence is Small ribosomal subunit protein uS11c (138 aa).

The tract at residues 1–23 is disordered; the sequence is MAKPIPRIGSRRNGRISSRKSTR. Residues 9-23 are compositionally biased toward basic residues; it reads GSRRNGRISSRKSTR.

It belongs to the universal ribosomal protein uS11 family. Part of the 30S ribosomal subunit.

The protein resides in the plastid. Its subcellular location is the chloroplast. The protein is Small ribosomal subunit protein uS11c of Cucumis sativus (Cucumber).